The following is a 166-amino-acid chain: Large ribosomal subunit protein eL21 (166 aa).

Belongs to the eukaryotic ribosomal protein eL21 family. In terms of assembly, component of the large ribosomal subunit.

It is found in the cytoplasm. It localises to the cytosol. The protein resides in the endoplasmic reticulum. Component of the large ribosomal subunit. The ribosome is a large ribonucleoprotein complex responsible for the synthesis of proteins in the cell. The polypeptide is Large ribosomal subunit protein eL21 (RPL21) (Entamoeba histolytica (strain ATCC 30459 / HM-1:IMSS / ABRM)).